A 461-amino-acid polypeptide reads, in one-letter code: Bifunctional protein HldE (461 aa).

The interval 1-312 is ribokinase; the sequence is MLEFLSQQKP…IRSFKSMSFE (312 aa). 191–194 provides a ligand contact to ATP; the sequence is NKKE. Asp-259 is an active-site residue. Residues 334-461 are cytidylyltransferase; sequence FTNGCFDIVH…KIIEKIKDKK (128 aa).

The protein in the N-terminal section; belongs to the carbohydrate kinase PfkB family. This sequence in the C-terminal section; belongs to the cytidylyltransferase family. Homodimer.

The enzyme catalyses D-glycero-beta-D-manno-heptose 7-phosphate + ATP = D-glycero-beta-D-manno-heptose 1,7-bisphosphate + ADP + H(+). It carries out the reaction D-glycero-beta-D-manno-heptose 1-phosphate + ATP + H(+) = ADP-D-glycero-beta-D-manno-heptose + diphosphate. It participates in nucleotide-sugar biosynthesis; ADP-L-glycero-beta-D-manno-heptose biosynthesis; ADP-L-glycero-beta-D-manno-heptose from D-glycero-beta-D-manno-heptose 7-phosphate: step 1/4. The protein operates within nucleotide-sugar biosynthesis; ADP-L-glycero-beta-D-manno-heptose biosynthesis; ADP-L-glycero-beta-D-manno-heptose from D-glycero-beta-D-manno-heptose 7-phosphate: step 3/4. Its function is as follows. Catalyzes the phosphorylation of D-glycero-D-manno-heptose 7-phosphate at the C-1 position to selectively form D-glycero-beta-D-manno-heptose-1,7-bisphosphate. In terms of biological role, catalyzes the ADP transfer from ATP to D-glycero-beta-D-manno-heptose 1-phosphate, yielding ADP-D-glycero-beta-D-manno-heptose. This chain is Bifunctional protein HldE, found in Campylobacter jejuni (strain RM1221).